We begin with the raw amino-acid sequence, 62 residues long: Amolopin-P2 (62 aa).

An N-terminal signal peptide occupies residues 1–22; sequence MFTLKKSLLLLFFLGTISLSLC. The propeptide occupies 23 to 44; sequence EQERGADEEENGGEVTEQEVKR.

Belongs to the frog skin active peptide (FSAP) family. Amolopin subfamily. In terms of tissue distribution, expressed by the skin glands.

It localises to the secreted. Its function is as follows. Antimicrobial peptide with activity against Gram-positive bacteria. Has been tested against S.aureus (MIC=37.5 ug/mL), against B.pumilus (MIC=75.0 ug/mL), B.cereus (no activity detected). Does not show activity against Gram-negative bacteria (E.coli, B.dysenteriae, A.calcoaceticus, P.aeruginosa) and fungi (C.albicans). Does not show hemolytic activity against rabbit erythrocytes. This is Amolopin-P2 from Amolops loloensis (Lolokou Sucker Frog).